The sequence spans 128 residues: Large ribosomal subunit protein bL19 (128 aa).

This sequence belongs to the bacterial ribosomal protein bL19 family.

In terms of biological role, this protein is located at the 30S-50S ribosomal subunit interface and may play a role in the structure and function of the aminoacyl-tRNA binding site. In Janthinobacterium sp. (strain Marseille) (Minibacterium massiliensis), this protein is Large ribosomal subunit protein bL19.